The following is an 806-amino-acid chain: Leucine--tRNA ligase (806 aa).

Positions 40-51 (PYPSGQGLHVGH) match the 'HIGH' region motif. A 'KMSKS' region motif is present at residues 578 to 582 (KMSKS). Lys581 lines the ATP pocket.

It belongs to the class-I aminoacyl-tRNA synthetase family.

Its subcellular location is the cytoplasm. The enzyme catalyses tRNA(Leu) + L-leucine + ATP = L-leucyl-tRNA(Leu) + AMP + diphosphate. The protein is Leucine--tRNA ligase of Limosilactobacillus reuteri (strain DSM 20016) (Lactobacillus reuteri).